Consider the following 278-residue polypeptide: Acyl-[acyl-carrier-protein]--UDP-N-acetylglucosamine O-acyltransferase (278 aa).

It belongs to the transferase hexapeptide repeat family. LpxA subfamily. In terms of assembly, homotrimer.

Its subcellular location is the cytoplasm. It catalyses the reaction a (3R)-hydroxyacyl-[ACP] + UDP-N-acetyl-alpha-D-glucosamine = a UDP-3-O-[(3R)-3-hydroxyacyl]-N-acetyl-alpha-D-glucosamine + holo-[ACP]. It functions in the pathway glycolipid biosynthesis; lipid IV(A) biosynthesis; lipid IV(A) from (3R)-3-hydroxytetradecanoyl-[acyl-carrier-protein] and UDP-N-acetyl-alpha-D-glucosamine: step 1/6. In terms of biological role, involved in the biosynthesis of lipid A, a phosphorylated glycolipid that anchors the lipopolysaccharide to the outer membrane of the cell. The polypeptide is Acyl-[acyl-carrier-protein]--UDP-N-acetylglucosamine O-acyltransferase (Brucella abortus (strain S19)).